The chain runs to 63 residues: MSDVTVVNCPTCGKPVVWGEISPFRPFCSKRCQLIDLGEWAAEEKRIASSGDPSDSDDWSEER.

Cys9, Cys12, Cys28, and Cys32 together coordinate Zn(2+).

Belongs to the DNA gyrase inhibitor YacG family. As to quaternary structure, interacts with GyrB. Zn(2+) serves as cofactor.

Functionally, inhibits all the catalytic activities of DNA gyrase by preventing its interaction with DNA. Acts by binding directly to the C-terminal domain of GyrB, which probably disrupts DNA binding by the gyrase. The chain is DNA gyrase inhibitor YacG from Salmonella paratyphi A (strain AKU_12601).